A 427-amino-acid polypeptide reads, in one-letter code: MYKRYFSTSLKTNQQALKKILEEKTYQVTTYARPSDLCITRGLNAKLFDDFNNKEYIDFTAGIAVTALGHANPKVAEILQTQATKLVHSSNLYFTKECLDLSEKLIEKTKKFGGQHDASKVFLCNSGTEANEAALKFAKKHGITKNPKKQGIIAFENSFHGRTMGALSVTWNKKYRTPFGDLVPHVSFLNINDELSKIKDFINTKKDEIAGLIIEPIQGEGGIFPIPIEKLVALKEICQKNDIIVIYDEIQCGLGRTGNLWAHAALPKAAHPDIFTSAKALGNGFPIAATVVNEKVNNALQVGDHGTTYGGNPLGCAVSNYVLDVIGDQAFLDSVTKKGELLKKGLLKIKEQHPDKISDVRGSGLIWGVEFKDAPGAIVQKARELGLLVITAGKTTVRFVPSLTIEDEVVEEGLTIFNKAVNDVFSK.

Lys-279 is subject to N6-(pyridoxal phosphate)lysine.

This sequence belongs to the class-III pyridoxal-phosphate-dependent aminotransferase family. Pyridoxal 5'-phosphate is required as a cofactor.

It is found in the mitochondrion matrix. The enzyme catalyses N(2)-acetyl-L-ornithine + 2-oxoglutarate = N-acetyl-L-glutamate 5-semialdehyde + L-glutamate. It participates in amino-acid biosynthesis; L-arginine biosynthesis; N(2)-acetyl-L-ornithine from L-glutamate: step 4/4. This is Acetylornithine aminotransferase, mitochondrial (ARG8) from Candida glabrata (strain ATCC 2001 / BCRC 20586 / JCM 3761 / NBRC 0622 / NRRL Y-65 / CBS 138) (Yeast).